Consider the following 214-residue polypeptide: Large ribosomal subunit protein bL25 (214 aa).

It belongs to the bacterial ribosomal protein bL25 family. CTC subfamily. As to quaternary structure, part of the 50S ribosomal subunit; part of the 5S rRNA/L5/L18/L25 subcomplex. Contacts the 5S rRNA. Binds to the 5S rRNA independently of L5 and L18.

This is one of the proteins that binds to the 5S RNA in the ribosome where it forms part of the central protuberance. This is Large ribosomal subunit protein bL25 from Polynucleobacter necessarius subsp. necessarius (strain STIR1).